The chain runs to 112 residues: Large ribosomal subunit protein uL18 (112 aa).

The protein belongs to the universal ribosomal protein uL18 family. In terms of assembly, part of the 50S ribosomal subunit; part of the 5S rRNA/L5/L18/L25 subcomplex. Contacts the 5S and 23S rRNAs.

Functionally, this is one of the proteins that bind and probably mediate the attachment of the 5S RNA into the large ribosomal subunit, where it forms part of the central protuberance. The chain is Large ribosomal subunit protein uL18 from Deinococcus deserti (strain DSM 17065 / CIP 109153 / LMG 22923 / VCD115).